The chain runs to 374 residues: tRNA-specific 2-thiouridylase MnmA (374 aa).

ATP is bound by residues 16-23 (GMSGGVDS) and Met42. The tract at residues 102–104 (NPD) is interaction with target base in tRNA. Cys107 functions as the Nucleophile in the catalytic mechanism. The cysteines at positions 107 and 203 are disulfide-linked. Gly131 contributes to the ATP binding site. The interaction with tRNA stretch occupies residues 153–155 (KDQ). The active-site Cysteine persulfide intermediate is the Cys203. The interaction with tRNA stretch occupies residues 311 to 312 (RY).

Belongs to the MnmA/TRMU family.

It localises to the cytoplasm. The enzyme catalyses S-sulfanyl-L-cysteinyl-[protein] + uridine(34) in tRNA + AH2 + ATP = 2-thiouridine(34) in tRNA + L-cysteinyl-[protein] + A + AMP + diphosphate + H(+). In terms of biological role, catalyzes the 2-thiolation of uridine at the wobble position (U34) of tRNA, leading to the formation of s(2)U34. The protein is tRNA-specific 2-thiouridylase MnmA of Exiguobacterium sibiricum (strain DSM 17290 / CCUG 55495 / CIP 109462 / JCM 13490 / 255-15).